Reading from the N-terminus, the 205-residue chain is Phosphoribosyl-dephospho-CoA transferase (205 aa).

Catalysis depends on residues D134 and D136.

Belongs to the MdcG family.

It carries out the reaction apo-[malonate decarboxylase ACP] + 2'-(5''-triphospho-alpha-D-ribosyl)-3'-dephospho-CoA = holo-[malonate decarboxylase ACP] + diphosphate. Transfers 2'-(5-triphosphoribosyl)-3'-dephosphocoenzyme-A to the apo-[acyl-carrier-protein] of the malonate decarboxylase to yield holo-[acyl-carrier-protein]. The chain is Phosphoribosyl-dephospho-CoA transferase (mdcG) from Klebsiella pneumoniae.